The following is a 743-amino-acid chain: Ovocleidin-116 (743 aa).

Residues 1–18 (MRATLFCLCLCLLGTVLP) form the signal peptide. The cysteines at positions 31 and 42 are disulfide-linked. Residue Asn62 is glycosylated (N-linked (GlcNAc...) asparagine). Residues 68–225 (KEEGDHQGTI…GTMGTGDSAI (158 aa)) are disordered. Over residues 129 to 141 (DSNSVYPTSTSVE) the composition is skewed to polar residues. Residues 169–179 (GPHGDGDGGNG) show a composition bias toward gly residues. An N-linked (GlcNAc...) asparagine; partial glycan is attached at Asn293. Disordered stretches follow at residues 333–356 (GDSV…ATEI), 385–454 (SGKG…GPER), 505–534 (ARTQ…QQEV), 549–577 (RHRA…STGG), 628–649 (DPWV…TVAG), and 692–743 (SGVG…RQSL). Over residues 402–420 (ATMTTRGGRGTASSGLTTG) the composition is skewed to low complexity. The segment covering 421–431 (DCSTAASTPSR) has biased composition (polar residues). A compositionally biased stretch (basic and acidic residues) spans 549–558 (RHRARVRPES).

The protein belongs to the osteoregulin family. Post-translationally, asn-62 is fully glycosylated, whereas only less than 10% of Asn-293 seem to be glycosylated. As to expression, in the eggshell, expressed mainly in the palisade and mammillary layers. Expression also detected in the hypertrophic zone of the epiphyseal growth plate, and in cortical and medullary bone (at protein level). Highly expressed in uterus. Not detected in the proximal oviduct, liver, magnum, duodenum and kidney.

Its subcellular location is the secreted. The protein localises to the extracellular space. It is found in the extracellular matrix. Its function is as follows. Major component of the eggshell matrix. May play an important role in the regulation of calcite growth during eggshell calcification. May also regulate the mineralization process in developing and growing bones. This chain is Ovocleidin-116, found in Gallus gallus (Chicken).